Reading from the N-terminus, the 469-residue chain is Neuraminidase (469 aa).

The Intravirion portion of the chain corresponds to 1-9 (MNPNQKIIT). The helical transmembrane segment at 10–30 (IGSVSLTIATICFLMQIAILV) threads the bilayer. Positions 11 to 33 (GSVSLTIATICFLMQIAILVTTV) are involved in apical transport and lipid raft association. The Virion surface portion of the chain corresponds to 31 to 469 (TTVTLHFKQY…DGADINLMPI (439 aa)). Positions 36–88 (HFKQYECSSPPNNQVIPCQPTIIERNITEIVYLTNTTIEKEICPKLVEYRNWS) are hypervariable stalk region. N-linked (GlcNAc...) asparagine; by host glycosylation is found at asparagine 61, asparagine 70, and asparagine 86. The segment at 91–469 (QCKITGFAPF…DGADINLMPI (379 aa)) is head of neuraminidase. Cystine bridges form between cysteine 92–cysteine 417, cysteine 124–cysteine 129, cysteine 183–cysteine 230, cysteine 232–cysteine 237, cysteine 278–cysteine 291, cysteine 280–cysteine 289, cysteine 318–cysteine 337, and cysteine 421–cysteine 447. Arginine 118 lines the substrate pocket. A glycan (N-linked (GlcNAc...) asparagine; by host) is linked at asparagine 146. Aspartate 151 (proton donor/acceptor) is an active-site residue. Arginine 152 provides a ligand contact to substrate. 2 N-linked (GlcNAc...) asparagine; by host glycosylation sites follow: asparagine 200 and asparagine 234. 276–277 (EE) contributes to the substrate binding site. Arginine 292 lines the substrate pocket. The Ca(2+) site is built by aspartate 293, glycine 297, and aspartate 324. A disordered region spans residues 326–350 (PRKNDSSSSSYCQNPNNEKGSHGVK). Asparagine 329 carries an N-linked (GlcNAc...) asparagine; by host glycan. The span at 331–343 (SSSSSYCQNPNNE) shows a compositional bias: polar residues. Arginine 371 provides a ligand contact to substrate. The N-linked (GlcNAc...) asparagine; by host glycan is linked to asparagine 402. Catalysis depends on tyrosine 406, which acts as the Nucleophile.

It belongs to the glycosyl hydrolase 34 family. As to quaternary structure, homotetramer. The cofactor is Ca(2+). Post-translationally, N-glycosylated.

The protein localises to the virion membrane. Its subcellular location is the host apical cell membrane. The enzyme catalyses Hydrolysis of alpha-(2-&gt;3)-, alpha-(2-&gt;6)-, alpha-(2-&gt;8)- glycosidic linkages of terminal sialic acid residues in oligosaccharides, glycoproteins, glycolipids, colominic acid and synthetic substrates.. With respect to regulation, inhibited by the neuraminidase inhibitors zanamivir (Relenza) and oseltamivir (Tamiflu). These drugs interfere with the release of progeny virus from infected cells and are effective against all influenza strains. Resistance to neuraminidase inhibitors is quite rare. Functionally, catalyzes the removal of terminal sialic acid residues from viral and cellular glycoconjugates. Cleaves off the terminal sialic acids on the glycosylated HA during virus budding to facilitate virus release. Additionally helps virus spread through the circulation by further removing sialic acids from the cell surface. These cleavages prevent self-aggregation and ensure the efficient spread of the progeny virus from cell to cell. Otherwise, infection would be limited to one round of replication. Described as a receptor-destroying enzyme because it cleaves a terminal sialic acid from the cellular receptors. May facilitate viral invasion of the upper airways by cleaving the sialic acid moieties on the mucin of the airway epithelial cells. Likely to plays a role in the budding process through its association with lipid rafts during intracellular transport. May additionally display a raft-association independent effect on budding. Plays a role in the determination of host range restriction on replication and virulence. Sialidase activity in late endosome/lysosome traffic seems to enhance virus replication. In Influenza A virus (strain A/Kitakyushu/159/1993 H3N2), this protein is Neuraminidase.